The following is a 275-amino-acid chain: Phosphate import ATP-binding protein PstB 2 (275 aa).

The ABC transporter domain maps to 29-270 (LEVKNLNIYY…PSEKKTEDYI (242 aa)). Residue 61 to 68 (GPSGCGKS) coordinates ATP.

Belongs to the ABC transporter superfamily. Phosphate importer (TC 3.A.1.7) family. The complex is composed of two ATP-binding proteins (PstB), two transmembrane proteins (PstC and PstA) and a solute-binding protein (PstS).

It is found in the cell membrane. It catalyses the reaction phosphate(out) + ATP + H2O = ADP + 2 phosphate(in) + H(+). In terms of biological role, part of the ABC transporter complex PstSACB involved in phosphate import. Responsible for energy coupling to the transport system. This chain is Phosphate import ATP-binding protein PstB 2, found in Bacillus licheniformis (strain ATCC 14580 / DSM 13 / JCM 2505 / CCUG 7422 / NBRC 12200 / NCIMB 9375 / NCTC 10341 / NRRL NRS-1264 / Gibson 46).